A 111-amino-acid chain; its full sequence is Cell division protein FtsB (111 aa).

At 1-3 (MRL) the chain is on the cytoplasmic side. Residues 4–21 (LFLVLLVLLGLIQYPLWL) traverse the membrane as a helical segment. Topologically, residues 22–111 (GKGGWFKVWD…PGQTASAPRR (90 aa)) are periplasmic. Residues 31–62 (DLQRQVAAQHETNDGLRARNAALEAEVRDLAT) are a coiled coil. Residues 88-111 (VPPGTPVPQPAPGAPGQTASAPRR) are disordered. Residues 90–100 (PGTPVPQPAPG) are compositionally biased toward pro residues. Over residues 101–111 (APGQTASAPRR) the composition is skewed to low complexity.

It belongs to the FtsB family. In terms of assembly, part of a complex composed of FtsB, FtsL and FtsQ.

The protein localises to the cell inner membrane. In terms of biological role, essential cell division protein. May link together the upstream cell division proteins, which are predominantly cytoplasmic, with the downstream cell division proteins, which are predominantly periplasmic. This chain is Cell division protein FtsB, found in Bordetella petrii (strain ATCC BAA-461 / DSM 12804 / CCUG 43448).